A 314-amino-acid polypeptide reads, in one-letter code: Very long chain fatty acid elongase 4 (314 aa).

N-linked (GlcNAc...) asparagine glycosylation occurs at Asn20. A run of 7 helical transmembrane segments spans residues 42 to 62 (LMQS…FVWL), 78 to 98 (VLII…RELF), 127 to 147 (ALWW…FFIL), 165 to 185 (MFTL…FFGA), 188 to 208 (NSFI…GPWI), 217 to 237 (YLTM…ALSL), and 247 to 267 (MHWA…NFYI). Residues 274 to 314 (KKPKTGKTAMNGISANGVSKSEKQLVIENGKKQKNGKAKGD) are disordered. The span at 293–304 (KSEKQLVIENGK) shows a compositional bias: basic and acidic residues. Positions 305-314 (KQKNGKAKGD) are enriched in basic residues. The Di-lysine motif motif lies at 310-314 (KAKGD).

This sequence belongs to the ELO family. ELOVL4 subfamily. In terms of assembly, oligomer. In terms of processing, N-glycosylated. Expressed mainly in retina. Also expressed in skin and thymus.

Its subcellular location is the endoplasmic reticulum membrane. It catalyses the reaction a very-long-chain acyl-CoA + malonyl-CoA + H(+) = a very-long-chain 3-oxoacyl-CoA + CO2 + CoA. The enzyme catalyses hexacosanoyl-CoA + malonyl-CoA + H(+) = 3-oxooctacosanyol-CoA + CO2 + CoA. The catalysed reaction is octacosanoyl-CoA + malonyl-CoA + H(+) = 3-oxo-triacontanoyl-CoA + CO2 + CoA. It carries out the reaction triacontanoyl-CoA + malonyl-CoA + H(+) = 3-oxo-dotriacontanoyl-CoA + CO2 + CoA. It catalyses the reaction (19Z,22Z,25Z,28Z,31Z)-tetratriacontapentaenoyl-CoA + malonyl-CoA + H(+) = 3-oxo-(21Z,24Z,27Z,30Z,33Z)-hexatriacontapentaenoyl-CoA + CO2 + CoA. The enzyme catalyses (4Z,7Z,10Z,13Z,16Z,19Z)-docosahexaenoyl-CoA + malonyl-CoA + H(+) = 3-oxo-(6Z,9Z,12Z,15Z,18Z,21Z)-tetracosahexaenoyl-CoA + CO2 + CoA. The catalysed reaction is (7Z,10Z,13Z,16Z)-docosatetraenoyl-CoA + malonyl-CoA + H(+) = (9Z,12Z,15Z,18Z)-3-oxotetracosatetraenoyl-CoA + CO2 + CoA. It carries out the reaction (11Z,14Z,17Z,20Z,23Z)-hexacosapentaenoyl-CoA + malonyl-CoA + H(+) = 3-oxo-(13Z,16Z,19Z,22Z,25Z)-octacosapentaenoyl-CoA + CO2 + CoA. It catalyses the reaction (13Z,16Z,19Z,22Z,25Z)-octacosapentaenoyl-CoA + malonyl-CoA + H(+) = 3-oxo-(15Z,18Z,21Z,24Z,27Z)-triacontapentaenoyl-CoA + CO2 + CoA. The enzyme catalyses (15Z,18Z,21Z,24Z,27Z)-triacontapentaenoyl-CoA + malonyl-CoA + H(+) = 3-oxo-(17Z,20Z,23Z,26Z,29Z)-dotriacontapentaenoyl-CoA + CO2 + CoA. The catalysed reaction is (17Z,20Z,23Z,26Z,29Z)-dotriacontapentaenoyl-CoA + malonyl-CoA + H(+) = 3-oxo-(19Z,22Z,25Z,28Z,31Z)-tetratriacontapentaenoyl-CoA + CO2 + CoA. It carries out the reaction (21Z,24Z,27Z,30Z,33Z)-hexatriacontapentaenoyl-CoA + malonyl-CoA + H(+) = 3-oxo-(23Z,26Z,29Z,32Z,35Z)-octatriacontapentaenoyl-CoA + CO2 + CoA. It catalyses the reaction (11Z,14Z,17Z,20Z)-hexacosatetraenoyl-CoA + malonyl-CoA + H(+) = (13Z,16Z,19Z,22Z)-3-oxooctacosatetraenoyl-CoA + CO2 + CoA. The enzyme catalyses (13Z,16Z,19Z,22Z)-octacosatetraenoyl-CoA + malonyl-CoA + H(+) = 3-oxo-(15Z,18Z,21Z,24Z)-triacontatetraenoyl-CoA + CO2 + CoA. The catalysed reaction is (15Z,18Z,21Z,24Z)-triacontatetraenoyl-CoA + malonyl-CoA + H(+) = 3-oxo-(17Z,20Z,23Z,26Z)-dotriacontatetraenoyl-CoA + CO2 + CoA. It carries out the reaction (17Z,20Z,23Z,26Z)-dotriacontatetraenoyl-CoA + malonyl-CoA + H(+) = 3-oxo-(19Z,22Z,25Z,28Z)-tetratriacontatetraenoyl-CoA + CO2 + CoA. It catalyses the reaction (19Z,22Z,25Z,28Z)-tetratriacontatetraenoyl-CoA + malonyl-CoA + H(+) = 3-oxo-(21Z,24Z,27Z,30Z)-hexatriacontatetraenoyl-CoA + CO2 + CoA. The enzyme catalyses (21Z,24Z,27Z,30Z)-hexatriacontatetraenoyl-CoA + malonyl-CoA + H(+) = 3-oxo-(23Z,26Z,29Z,32Z)-octatriacontatetraenoyl-CoA + CO2 + CoA. The catalysed reaction is (6Z,9Z,12Z,15Z,18Z,21Z)-tetracosahexaenoyl-CoA + malonyl-CoA + H(+) = 3-oxo-(8Z,11Z,14Z,17Z,20Z,23Z)-hexacosahexaenoyl-CoA + CO2 + CoA. It carries out the reaction (8Z,11Z,14Z,17Z,20Z,23Z)-hexacosahexaenoyl-CoA + malonyl-CoA + H(+) = 3-oxo-(10Z,13Z,16Z,19Z,22Z,25Z)-octacosahexaenoyl-CoA + CO2 + CoA. It catalyses the reaction (10Z,13Z,16Z,19Z,22Z,25Z)-octacosahexaenoyl-CoA + malonyl-CoA + H(+) = 3-oxo-(12Z,15Z,18Z,21Z,24Z,27Z)-triacontahexaenoyl-CoA + CO2 + CoA. The enzyme catalyses (12Z,15Z,18Z,21Z,24Z,27Z)-triacontahexaenoyl-CoA + malonyl-CoA + H(+) = 3-oxo-(14Z,17Z,20Z,23Z,26Z,29Z)-dotriacontahexaenoyl-CoA + CO2 + CoA. The catalysed reaction is (14Z,17Z,20Z,23Z,26Z,29Z)-dotriacontahexaenoyl-CoA + malonyl-CoA + H(+) = 3-oxo-(16Z,19Z,22Z,25Z,28Z,31Z)-tetratriacontahexaenoyl-CoA + CO2 + CoA. It carries out the reaction (16Z,19Z,22Z,25Z,28Z,31Z)-tetratriacontahexaenoyl-CoA + malonyl-CoA + H(+) = 3-oxo-(18Z,21Z,24Z,27Z,30Z,33Z)-hexatriacontahexaenoyl-CoA + CO2 + CoA. It catalyses the reaction (9Z,12Z,15Z,18Z,21Z)-tetracosapentaenoyl-CoA + malonyl-CoA + H(+) = 3-oxo-(11Z,14Z,17Z,20Z,23Z)-hexacosapentaenoyl-CoA + CO2 + CoA. It functions in the pathway lipid metabolism; fatty acid biosynthesis. Functionally, catalyzes the first and rate-limiting reaction of the four reactions that constitute the long-chain fatty acids elongation cycle. This endoplasmic reticulum-bound enzymatic process allows the addition of 2 carbons to the chain of long- and very long-chain fatty acids (VLCFAs) per cycle. Condensing enzyme that catalyzes the synthesis of very long chain saturated (VLC-SFA) and polyunsaturated (PUFA) fatty acids that are involved in multiple biological processes as precursors of membrane lipids and lipid mediators. May play a critical role in early brain and skin development. The polypeptide is Very long chain fatty acid elongase 4 (Macaca fascicularis (Crab-eating macaque)).